Reading from the N-terminus, the 1235-residue chain is MSLPRRPGPSPPHEEPRRYRQSGSRRSRPPPADVETGYAPMAGERPSQQQRVPSISSFPETLPSPNPNVERDPLAPTPEPAHPSGIPQRKRSLIRPERNRIGKDHPNYHYRKHAANMNTLPSSTGHDPIYEDLEGATDDVSGTGSRNDDDVSEESPPRRKHSTKMQVIETEKSGDERRRRRKSDTTKHGKIVKASKGKREKSGGLPTPSFWNIYCGFVTFWCPGFVLKCFGMPEMAQQRAWREKMGLISIILLIMGFVGFITFGFTQVVCGKPPLRLRINEVGSGYMIFHGSAYDLTKSHHPPAEGIPRRPDGLGANVIYDLPQHYGGQDGSFLFQNVNGKCKGLITKQENSDVPSDKSGNLAWYFPCNTFNQDGSSKPNTTIPYYLGYACHTTANARDSFYLGLKSSADVYFTWDDIKNSSRNLVVYSGHVLDLDLLHWFNDTQVTYPARFKELRDKNTAGNQAIRGRDITHAFQSSKDKQIAECFEEIIKVGSVDTETVGCIASKVVLYVSLVLILAVVLARFVLALIFQWFISKTYAAAKTSQTSDQRKRNRQIEDWTEDIYRAPPRLPGEVGSSVAGSSDRQSKRSSAFLPTHSRFSTVYGNERGNRKPGLPTTMASQNAAGQLLHPGTIYGQGNESRSSFLKSDAYGSSSSPADGPGPAGFIHEAVVPQPPSDWMPFGFPLAHTICLVTAYSEGEMGVRTTLDSIAMTDYPNSHKVILVICDGIIKGHGEEHSTPDIILGMMKDHTIHPDDVEPFSYVAVATGSKRHNMAKVYTGFYDYGTNSAIPLEKQQRVPMMMVVKCGTPAEASKSKPGNRGKRDSQIILMSFLQKVMFDERMTELEYEMFNGLWKITGISPDFYEIVLMVDADTKVFPDSLTHMISAMVKDPEIMGLCGETKIANKRASWVSAIQVFEYFVSHHLAKAFESVFGGVTCLPGCFCMYRIKAPKGAQNYWVPILANPDVVEHYSENVVDTLHKKNLLLLGEDRYLSTLMLRTFPKRKQVFVPQAVCKTTVPDEFMVLLSQRRRWINSTIHNLMELVLVRDLCGTFCFSMQFIVGIELIGTLVLPAAIAFTFYVVIISIINSPPQIIPLVLLGLILGLPAILVVVTAHSWSYIIWMFIYLLSLPVWNFVLPTYAFWKFDDFSWGDTRKTAGEKSSKGGHGEAEGEFDSSMITMKRWAEFERDRRVRSTYWAGSRDNVISGVGGSNGWGSSQPRGHEQGRHFDDYFSDA.

A compositionally biased stretch (pro residues) spans 1–11; that stretch reads MSLPRRPGPSP. The segment at 1–203 is disordered; sequence MSLPRRPGPS…ASKGKREKSG (203 aa). Residues 1 to 212 lie on the Cytoplasmic side of the membrane; it reads MSLPRRPGPS…GGLPTPSFWN (212 aa). Residues 19–28 show a composition bias toward basic residues; the sequence is YRQSGSRRSR. Polar residues predominate over residues 46-59; that stretch reads PSQQQRVPSISSFP. The span at 94 to 107 shows a compositional bias: basic and acidic residues; that stretch reads IRPERNRIGKDHPN. Residues 116 to 125 show a composition bias toward polar residues; the sequence is NMNTLPSSTG. The segment covering 169–187 has biased composition (basic and acidic residues); that stretch reads ETEKSGDERRRRRKSDTTK. A compositionally biased stretch (basic residues) spans 188-199; it reads HGKIVKASKGKR. The helical transmembrane segment at 213-233 threads the bilayer; that stretch reads IYCGFVTFWCPGFVLKCFGMP. Topologically, residues 234–244 are extracellular; that stretch reads EMAQQRAWREK. The helical transmembrane segment at 245–265 threads the bilayer; it reads MGLISIILLIMGFVGFITFGF. Topologically, residues 266-514 are cytoplasmic; sequence TQVVCGKPPL…ASKVVLYVSL (249 aa). Residues 515–535 form a helical membrane-spanning segment; the sequence is VLILAVVLARFVLALIFQWFI. At 536–1065 the chain is on the extracellular side; it reads SKTYAAAKTS…SMQFIVGIEL (530 aa). The segment at 545-592 is disordered; that stretch reads SQTSDQRKRNRQIEDWTEDIYRAPPRLPGEVGSSVAGSSDRQSKRSSA. Residues 549 to 558 show a composition bias toward basic and acidic residues; it reads DQRKRNRQIE. Asn639 is a glycosylation site (N-linked (GlcNAc...) asparagine). Positions 645-670 are disordered; it reads FLKSDAYGSSSSPADGPGPAGFIHEA. The segment covering 648 to 665 has biased composition (low complexity); it reads SDAYGSSSSPADGPGPAG. Asn1034 carries an N-linked (GlcNAc...) asparagine glycan. Residues 1066–1086 form a helical membrane-spanning segment; the sequence is IGTLVLPAAIAFTFYVVIISI. Topologically, residues 1087 to 1092 are cytoplasmic; that stretch reads INSPPQ. A helical transmembrane segment spans residues 1093 to 1113; that stretch reads IIPLVLLGLILGLPAILVVVT. Over 1114–1116 the chain is Extracellular; sequence AHS. Residues 1117–1137 traverse the membrane as a helical segment; that stretch reads WSYIIWMFIYLLSLPVWNFVL. At 1138-1235 the chain is on the cytoplasmic side; that stretch reads PTYAFWKFDD…RHFDDYFSDA (98 aa). The tract at residues 1201–1235 is disordered; sequence RDNVISGVGGSNGWGSSQPRGHEQGRHFDDYFSDA. Residues 1220-1235 show a composition bias toward basic and acidic residues; the sequence is RGHEQGRHFDDYFSDA.

This sequence belongs to the chitin synthase family. Class IV subfamily.

It localises to the cell membrane. The catalysed reaction is [(1-&gt;4)-N-acetyl-beta-D-glucosaminyl](n) + UDP-N-acetyl-alpha-D-glucosamine = [(1-&gt;4)-N-acetyl-beta-D-glucosaminyl](n+1) + UDP + H(+). In terms of biological role, polymerizes chitin, a structural polymer of the cell wall and septum, by transferring the sugar moiety of UDP-GlcNAc to the non-reducing end of the growing chitin polymer. This chain is Chitin synthase 4 (chs-4), found in Neurospora crassa (strain ATCC 24698 / 74-OR23-1A / CBS 708.71 / DSM 1257 / FGSC 987).